Here is a 291-residue protein sequence, read N- to C-terminus: NAD kinase (291 aa).

The active-site Proton acceptor is the aspartate 73. NAD(+) contacts are provided by residues 73–74 (DG), 147–148 (ND), arginine 175, aspartate 177, and glutamine 246.

The protein belongs to the NAD kinase family. The cofactor is a divalent metal cation.

It localises to the cytoplasm. It catalyses the reaction NAD(+) + ATP = ADP + NADP(+) + H(+). Involved in the regulation of the intracellular balance of NAD and NADP, and is a key enzyme in the biosynthesis of NADP. Catalyzes specifically the phosphorylation on 2'-hydroxyl of the adenosine moiety of NAD to yield NADP. This is NAD kinase from Chromobacterium violaceum (strain ATCC 12472 / DSM 30191 / JCM 1249 / CCUG 213 / NBRC 12614 / NCIMB 9131 / NCTC 9757 / MK).